Reading from the N-terminus, the 242-residue chain is Small ribosomal subunit protein eS6 (242 aa).

Residues 219–229 (EKKSEKAEEKK) are compositionally biased toward basic and acidic residues. The disordered stretch occupies residues 219–242 (EKKSEKAEEKKRRASSLRTQSVQA). Phosphoserine is present on residues Ser233 and Ser234.

The protein belongs to the eukaryotic ribosomal protein eS6 family. In terms of processing, phosphorylated.

This Yarrowia lipolytica (strain CLIB 122 / E 150) (Yeast) protein is Small ribosomal subunit protein eS6 (RPS6).